Consider the following 71-residue polypeptide: Dermaseptin-PT9 (71 aa).

Residues 1–22 form the signal peptide; it reads MAFLKKSLFLVLFLGLVSLSIC. A propeptide spanning residues 23 to 43 is cleaved from the precursor; that stretch reads EEEKRENEMEQEDDEQSEMKR. Valine 68 bears the Valine amide mark. Residues 69 to 71 constitute a propeptide that is removed on maturation; that stretch reads GEQ.

The protein belongs to the frog skin active peptide (FSAP) family. Dermaseptin subfamily. In terms of tissue distribution, expressed by the skin glands.

It is found in the secreted. The protein resides in the target cell membrane. Antimicrobial peptide with activity against fungi, Gram-positive and Gram-negative bacteria. Is active against S.aureus (MIC=16 uM), MRSA (MIC=32 uM), E.faecalis (MIC=16 uM), E.coli (MIC=8 uM), P.aeruginosa (MIC=16 uM), K.pneumoniae (MIC=8 uM), and C.albicans (MIC=64 uM). Also inhibits biofilm formation. Acts by disrupting cell membranes. Also exhibits anti-proliferative effect against various human cancer cells. Shows weak hemolytic activity towards horse erythrocytes. The protein is Dermaseptin-PT9 of Phyllomedusa tarsius (Brownbelly leaf frog).